A 68-amino-acid chain; its full sequence is Large ribosomal subunit protein uL29 (68 aa).

The protein belongs to the universal ribosomal protein uL29 family.

The chain is Large ribosomal subunit protein uL29 from Chloroflexus aggregans (strain MD-66 / DSM 9485).